The primary structure comprises 782 residues: MLEFAKRESARAVTEKRRALEARLEKIKVEEEKQRHATDHPKEARKRRRVDTSSGDPGPEQDDQFILDDYDSDADERMASSKKLSDISGLSTSTLELLERFKEQFSAPVEDEIGHEDDDVKIFYCSRTHSQLSQFSSELRRVKMPSSMPAELSTSDANTDEVQERVKHLTLGSRKNLCINPKVMSLGNAAAINERCLELQQPGIAAEKRCPYLPSKEDEGQILQFRDHTLATIKDIEDMGKLGKRMGICPYYASRSVLKHSENVLLKAQKIVTLPYPLLLQRSARDALDLSIKNHVVIIDEAHNLMDAICNIHSVTIRLSQLQTALLQLTTYAHKHKARLKGKNRSYIAQIIRLVSSIRDHLRSILGQNLPAEGTVDPSDLMAGKGVDQINPYKLSRYLQESKLARKVDGYVEFLKNKNQQSDDKPSSPVLFLVQSFLLSLMNPSAEGRFFYLKCHDDIQLRYMLLDPTNQFREIVEDARAVILAGGTMSPMSDYRNHLFSYIAPSRLDTFSYGHVIPPENLIAHTLVNGVLGSEFDFTYDSRDSEKMILDLGRTVATLCQAIPDGVVAFFPSYDYLSRIVAIWRKPLEGEKGETILSLIEREKSILYEGRDMGPKTDDLLQEYTRTIDSGQGALLLSVVGGKLSEGINFSDKLGRGVLIIGLPFPNIRSAVWQAKIQYVEQKTYNSSSGSEKDRQSIAKAAGKDFYENACMRAVNQCIGRAIRHRNDYAAIVMIDRRYEKANIQGKLPAWIKESMLRRSVRRPASALAADLSNFFSGRSPR.

A Helicase ATP-binding domain is found at 1–352; the sequence is MLEFAKRESA…KNRSYIAQII (352 aa). Positions 23-42 are enriched in basic and acidic residues; the sequence is RLEKIKVEEEKQRHATDHPK. The disordered stretch occupies residues 23 to 66; sequence RLEKIKVEEEKQRHATDHPKEARKRRRVDTSSGDPGPEQDDQFI. 80 to 87 provides a ligand contact to ATP; that stretch reads SSKKLSDI. Positions 178, 196, 210, and 249 each coordinate [4Fe-4S] cluster. The DEAH box motif lies at 300–303; that stretch reads DEAH.

The protein belongs to the DEAD box helicase family. DEAH subfamily. DDX11/CHL1 sub-subfamily. Requires [4Fe-4S] cluster as cofactor.

It localises to the nucleus. It carries out the reaction Couples ATP hydrolysis with the unwinding of duplex DNA at the replication fork by translocating in the 5'-3' direction. This creates two antiparallel DNA single strands (ssDNA). The leading ssDNA polymer is the template for DNA polymerase III holoenzyme which synthesizes a continuous strand.. It catalyses the reaction ATP + H2O = ADP + phosphate + H(+). Its function is as follows. ATP-dependent DNA helicase important for chromosome transmission and normal cell cycle progression in G(2)/M. May have a role in changing DNA topology to allow the loading of proteins involved in maintaining sister chromatid cohesion in the vicinity of the centromeres. Has a specific role in chromosome segregation during meiosis II. The sequence is that of ATP-dependent DNA helicase chl1 (chl1) from Aspergillus fumigatus (strain ATCC MYA-4609 / CBS 101355 / FGSC A1100 / Af293) (Neosartorya fumigata).